The chain runs to 852 residues: MDNTKEKDNFKDDLLLRMGLNDNKAGMEGLDKEKINKIIMEATKGSRFYGNELKKEKQVNQRIENMMQQKAQITSQQLRKAQLQVDKFAMELERNRNLNNTIVHVDMDAFYAAVEMRDNPELKDKPIAVGSMSMLATSNYHARRFGVRAAMPGFIAKRLCPQLIIVPPNFDKYRAVSKEVKEILAEYDPNFMAMSLDEAYLNITQHLQERQDWPEDKRRYFIKMGNYLKIDTPRQEANELTEYERSISPLLFEDSPPDLQPQGSPFQLNSEEQNNPQIAQNSVVFGTSAEEVVKEIRFRIEQKTTLTASAGIAPNTMLAKVCSDKNKPNGQYQILPSRSAVMDFIKDLPIRKVSGIGKVTEKMLMALGIVTCTELYQQRALLSLLFSETSWHYFLHIALGLGSTDLARDGERKSMSVERTFSEISKTEEQYSLCQELCAELAHDLQKEGLKGRTVTIKLKNVNFEVKTRASTVPAAISTAEEIFAIAKELLRTEVNVGSPHPLRLRLMGVRMSTFSSEDDRKHQQRSIIGFLQAGNQALSSTGDSLDKTDKTELAKPLEMSHKKSFFDKKRSERISNCQDTSRCKTAGQQALQILEPSQALKKLSESFETSENSNDCQTFICPVCFREQEGVSLEAFNEHVDECLDGPSTSENSKISCYSHASSADIGQKEDVHPSIPLCEKRGHENGEITLVDGVDLTGTEDRSLKAARMDTLENNRSKEECPDIPDKSCPISLENETISTLSRQDSVQPCTDEVVTGRALVCPVCNLEQETSDLTLFNIHVDICLNKGIIQELRNSEGNSVKQPKESSRSTDRLQKASGRTKRPGTKTKSSTLKKTKPRDPRHTLDGFFK.

Residues 102 to 357 enclose the UmuC domain; that stretch reads IVHVDMDAFY…LPIRKVSGIG (256 aa). Mg(2+)-binding residues include Asp106 and Asp197. The interval 252–273 is disordered; that stretch reads FEDSPPDLQPQGSPFQLNSEEQ. The span at 261 to 273 shows a compositional bias: polar residues; that stretch reads PQGSPFQLNSEEQ. 2 UBZ4-type zinc fingers span residues 619–649 and 761–791; these read TFICPVCFREQEGVSLEAFNEHVDECLDGPS and ALVCPVCNLEQETSDLTLFNIHVDICLNKGI. The Zn(2+) site is built by Cys622, Cys625, His640, Cys644, Cys764, Cys767, His782, and Cys786. Residues 798–852 are disordered; it reads SEGNSVKQPKESSRSTDRLQKASGRTKRPGTKTKSSTLKKTKPRDPRHTLDGFFK. Positions 805 to 817 are enriched in basic and acidic residues; it reads QPKESSRSTDRLQ. Over residues 821–839 the composition is skewed to basic residues; that stretch reads GRTKRPGTKTKSSTLKKTK. Residues 840–852 are compositionally biased toward basic and acidic residues; the sequence is PRDPRHTLDGFFK.

It belongs to the DNA polymerase type-Y family. Interacts with PCNA. Interacts with REV1. Mg(2+) is required as a cofactor. The cofactor is Mn(2+). As to expression, detected at low levels in heart, brain, lung, liver, kidney and testis.

The protein resides in the nucleus. It carries out the reaction DNA(n) + a 2'-deoxyribonucleoside 5'-triphosphate = DNA(n+1) + diphosphate. DNA polymerase specifically involved in DNA repair. Plays an important role in translesion synthesis, where the normal high-fidelity DNA polymerases cannot proceed and DNA synthesis stalls. Depending on the context, it inserts the correct base, but causes frequent base transitions, transversions and frameshifts. Lacks 3'-5' proofreading exonuclease activity. Forms a Schiff base with 5'-deoxyribose phosphate at abasic sites, but does not have lyase activity. This is DNA polymerase kappa (Polk) from Mus musculus (Mouse).